The following is a 241-amino-acid chain: MQGLKSAISFFTIIPVKADLNKNIVFFFTITGAITGLMAASIFYLTSFINQLLASVASVSFLIIIYGFNHADAVLDLGDTFMVHDPEKKKIIIKDVYHGTGSVVTFFIIYIITISLLSSFNSIQGSIALILSETISRFSMLMSMYKSNSFSGGISEIFISYFDKPFKITFFNFLVIILIFLIFYKYIIFTMFSLISIVISYYFKSHEQKIFNGINGDIIGFTGELSRLISLLLILISFKLI.

A run of 5 helical transmembrane segments spans residues 24-44, 48-68, 103-123, 175-195, and 218-238; these read IVFFFTITGAITGLMAASIFY, FINQLLASVASVSFLIIIYGF, VVTFFIIYIITISLLSSFNSI, VIILIFLIFYKYIIFTMFSLI, and IIGFTGELSRLISLLLILISF.

It belongs to the CobS family. Requires Mg(2+) as cofactor.

It localises to the cell membrane. It carries out the reaction alpha-ribazole + adenosylcob(III)inamide-GDP = adenosylcob(III)alamin + GMP + H(+). It catalyses the reaction alpha-ribazole 5'-phosphate + adenosylcob(III)inamide-GDP = adenosylcob(III)alamin 5'-phosphate + GMP + H(+). Its pathway is cofactor biosynthesis; adenosylcobalamin biosynthesis; adenosylcobalamin from cob(II)yrinate a,c-diamide: step 7/7. Functionally, joins adenosylcobinamide-GDP and alpha-ribazole to generate adenosylcobalamin (Ado-cobalamin). Also synthesizes adenosylcobalamin 5'-phosphate from adenosylcobinamide-GDP and alpha-ribazole 5'-phosphate. This chain is Adenosylcobinamide-GDP ribazoletransferase, found in Picrophilus torridus (strain ATCC 700027 / DSM 9790 / JCM 10055 / NBRC 100828 / KAW 2/3).